A 353-amino-acid polypeptide reads, in one-letter code: UPF0283 membrane protein YcjF (353 aa).

Residues 1-19 (MSEPLKPRIDFAEPLKEEP) are compositionally biased toward basic and acidic residues. Residues 1–35 (MSEPLKPRIDFAEPLKEEPTSAFKAQQTFSEAESR) form a disordered region. The next 3 helical transmembrane spans lie at 70–90 (MVMGGLALFGASVVGQGVQWT), 100–120 (VALGGCAAGALIIGAGVGSVV), and 213–233 (ESTLMIVVSPLALVDMAFIAW).

The protein belongs to the UPF0283 family.

The protein resides in the cell inner membrane. The protein is UPF0283 membrane protein YcjF of Salmonella newport (strain SL254).